The primary structure comprises 790 residues: Probable copper-transporting ATPase SynA (790 aa).

Over 1–105 the chain is Cytoplasmic; sequence MPAAIVHSAD…IPPLQQQRLQ (105 aa). Residues 14-81 form the HMA domain; it reads TSILVEVEGM…EITGLGFRAQ (68 aa). Cys25 and Cys28 together coordinate Cu cation. A helical transmembrane segment spans residues 106 to 125; it reads LAIAAFLLIVSSWGHLGHWL. Over 126–134 the chain is Extracellular; that stretch reads DHPLPGTDQ. The helical transmembrane segment at 135 to 154 threads the bilayer; it reads LWFHALLAIWALLGPGRSIL. Over 155–166 the chain is Cytoplasmic; it reads QAGWQGLRCGAP. Residues 167–189 form a helical membrane-spanning segment; it reads NMNSLVLLGTGSAYLASLVALLW. Residues 190–193 are Extracellular-facing; the sequence is PQLG. The chain crosses the membrane as a helical span at residues 194-211; that stretch reads WVCFLDEPVMLLGFILLG. Residues 212–357 lie on the Cytoplasmic side of the membrane; sequence RTLEEQARFR…RKAPVQRFAD (146 aa). A helical membrane pass occupies residues 358–380; that stretch reads AIAGRFVYGVCAIAALTFGFWAT. The Extracellular portion of the chain corresponds to 381–416; that stretch reads LGSRWWPQVLQQPLPGLLIHAPHHGMEMAHPHSHSP. A helical membrane pass occupies residues 417–439; that stretch reads LLLALTLAISVLVVACPCALGLA. Over 440 to 726 the chain is Cytoplasmic; that stretch reads TPTAILVATG…QMGLRTIRQN (287 aa). The 4-aspartylphosphate intermediate role is filled by Asp476. Mg(2+)-binding residues include Asp669 and Asp673. The helical transmembrane segment at 727–749 threads the bilayer; the sequence is LTWALGYNVVMLPLAAGAFLPAY. At 750-753 the chain is on the extracellular side; sequence GLAL. Residues 754–776 traverse the membrane as a helical segment; it reads TPAIAGACMAVSSLAVVSNSLLL. Residues 777 to 790 are Cytoplasmic-facing; that stretch reads RYWFRRSLNHSVSV.

It belongs to the cation transport ATPase (P-type) (TC 3.A.3) family. Type IB subfamily.

The protein localises to the cell membrane. It carries out the reaction Cu(2+)(in) + ATP + H2O = Cu(2+)(out) + ADP + phosphate + H(+). Its function is as follows. Involved in copper transport. The chain is Probable copper-transporting ATPase SynA (synA) from Synechococcus sp. (strain ATCC 27144 / PCC 6301 / SAUG 1402/1) (Anacystis nidulans).